Consider the following 1175-residue polypeptide: DNA ligase 3 (1175 aa).

Residues 195–243 (HDFDNDNGDGDDGDGDDNDDDDGDGDSDSDKKKKKSSGGSGSDSGSKKK) are disordered. Positions 199 to 221 (NDNGDGDDGDGDDNDDDDGDGDS) are enriched in acidic residues. Position 281 (glutamate 281) interacts with ATP. The N6-AMP-lysine intermediate role is filled by lysine 283. Positions 288 and 303 each coordinate ATP. Positions 334 and 432 each coordinate Mg(2+). ATP contacts are provided by lysine 437, arginine 448, and lysine 452. Disordered stretches follow at residues 612–669 (PVGK…LKFV) and 829–869 (KSSP…KRGR). Composition is skewed to low complexity over residues 622–635 (TTTTTTTTTTTTTT) and 829–859 (KSSPTTTSPTTTSPTTTSPKITSPSSSSSPS). A BRCT 1 domain is found at 883 to 976 (PSLPIFEDVN…KLLPLHEDYI (94 aa)). The segment at 984 to 1036 (PDYSQSSSSSSMSIEEEKIVVTTTSDDPSEGNQQQQDKKVIKESKIIQSKDHS) is disordered. Positions 987-996 (SQSSSSSSMS) are enriched in low complexity. Over residues 1004–1018 (VTTTSDDPSEGNQQQ) the composition is skewed to polar residues. Residues 1019–1036 (QDKKVIKESKIIQSKDHS) are compositionally biased toward basic and acidic residues. Residues 1067–1174 (HLLSIFQECI…DLLDVKNYKL (108 aa)) enclose the BRCT 2 domain.

This sequence belongs to the ATP-dependent DNA ligase family. The cofactor is Mg(2+).

It localises to the nucleus. The enzyme catalyses ATP + (deoxyribonucleotide)n-3'-hydroxyl + 5'-phospho-(deoxyribonucleotide)m = (deoxyribonucleotide)n+m + AMP + diphosphate.. The alpha isoform interacts with DNA-repair protein XRCC1 and can correct defective DNA strand-break repair and sister chromatid exchange following treatment with ionizing radiation and alkylating agents. The beta isoform does not interact with XRCC1 and may be specifically involved in the completion of homologous recombination events that occur during meiotic prophase. The chain is DNA ligase 3 (lig3) from Dictyostelium discoideum (Social amoeba).